A 232-amino-acid polypeptide reads, in one-letter code: Orotidine 5'-phosphate decarboxylase (232 aa).

Residues D13, K35, 62 to 71 (DLKFHDIPNT), T121, R182, Q191, G211, and R212 each bind substrate. The active-site Proton donor is the K64.

It belongs to the OMP decarboxylase family. Type 1 subfamily. In terms of assembly, homodimer.

The catalysed reaction is orotidine 5'-phosphate + H(+) = UMP + CO2. Its pathway is pyrimidine metabolism; UMP biosynthesis via de novo pathway; UMP from orotate: step 2/2. Its function is as follows. Catalyzes the decarboxylation of orotidine 5'-monophosphate (OMP) to uridine 5'-monophosphate (UMP). The polypeptide is Orotidine 5'-phosphate decarboxylase (Teredinibacter turnerae (strain ATCC 39867 / T7901)).